The chain runs to 476 residues: Replication factor C large subunit (476 aa).

50–57 contacts ATP; the sequence is GPPGVGKT. The tract at residues 447-476 is disordered; sequence YEKGTKKGKGEKRRKGSDEGSGLLKWLKKD. Over residues 452–461 the composition is skewed to basic residues; that stretch reads KKGKGEKRRK.

Belongs to the activator 1 small subunits family. RfcL subfamily. Heteromultimer composed of small subunits (RfcS) and large subunits (RfcL).

In terms of biological role, part of the RFC clamp loader complex which loads the PCNA sliding clamp onto DNA. The chain is Replication factor C large subunit from Ignicoccus hospitalis (strain KIN4/I / DSM 18386 / JCM 14125).